Consider the following 508-residue polypeptide: MWELLVFLLFAVAYFLWPKAKCPGAKYPKSLPSLPLVGSLLFLPRSGHPHKNFFKLQKKYGPIYSFRLGTKTTVMVGDHQLAKEVLVKKGKEFSGRPHVVTLDILSDNQKGIAFADHGASWQMHRKLALATFALFKDGDQRLEKIICREISLLCDNLAMQDGQSIDLYLPLFLAVTNIICLICFNSSFKNGDPALKIIQNYNEGILKTLGKDNLVDIFPVLKIFPNKTLEKMKNYVKNRDELLREILEKHKENFSNDSITNMLDVLIQARMNSDNNGAASDQDSKLLSDKHILTTIGDIFGAGVETTTSVVRWTVAFLLHHPQLYKKLQEEIDQNIGFSRTPTMSDRNQLILLEATIREVLRIRPVAPTLIPHKAIMDSSIGEFAVDKGTNVIINLWALHHNEKEWYRPDQFMPERFLDPTRSQLISPSLSYLPFGAGPRSCLGESLARQEVFLFMAWLLQRFDLEVPDDGQLPHLEGNPTVVFLIAPFKVKVKVRQAWREAQAEGST.

Asn202 is a binding site for substrate. Residue Cys442 participates in heme binding.

This sequence belongs to the cytochrome P450 family. Heme serves as cofactor.

The protein resides in the endoplasmic reticulum membrane. It localises to the microsome membrane. The catalysed reaction is a C21-steroid + reduced [NADPH--hemoprotein reductase] + O2 = a 17alpha-hydroxy-C21-steroid + oxidized [NADPH--hemoprotein reductase] + H2O + H(+). The enzyme catalyses progesterone + reduced [NADPH--hemoprotein reductase] + O2 = 17alpha-hydroxyprogesterone + oxidized [NADPH--hemoprotein reductase] + H2O + H(+). It carries out the reaction pregnenolone + reduced [NADPH--hemoprotein reductase] + O2 = 17alpha-hydroxypregnenolone + oxidized [NADPH--hemoprotein reductase] + H2O + H(+). It catalyses the reaction 17alpha-hydroxyprogesterone + reduced [NADPH--hemoprotein reductase] + O2 = androst-4-ene-3,17-dione + acetate + oxidized [NADPH--hemoprotein reductase] + H2O + 2 H(+). The catalysed reaction is 17alpha-hydroxyprogesterone + reduced [NADPH--hemoprotein reductase] + O2 = 16alpha,17alpha-dihydroxyprogesterone + oxidized [NADPH--hemoprotein reductase] + H2O + H(+). The enzyme catalyses 16alpha,17alpha-dihydroxyprogesterone + reduced [NADPH--hemoprotein reductase] + O2 = 6beta,16alpha,17alpha-trihydroxyprogesterone + oxidized [NADPH--hemoprotein reductase] + H2O + H(+). It carries out the reaction 17alpha-hydroxypregnenolone + reduced [NADPH--hemoprotein reductase] + O2 = 3beta-hydroxyandrost-5-en-17-one + acetate + oxidized [NADPH--hemoprotein reductase] + H2O + 2 H(+). It catalyses the reaction 16alpha,17alpha-dihydroxypregnenolone + reduced [NADPH--hemoprotein reductase] + O2 = 3beta,16alpha-dihydroxy-androst-5-en-17-one + acetate + oxidized [NADPH--hemoprotein reductase] + H2O + 2 H(+). The catalysed reaction is 3beta-hydroxyandrost-5-en-17-one + reduced [NADPH--hemoprotein reductase] + O2 = 3beta,16alpha-dihydroxy-androst-5-en-17-one + oxidized [NADPH--hemoprotein reductase] + H2O + H(+). The enzyme catalyses androst-4-ene-3,17-dione + reduced [NADPH--hemoprotein reductase] + O2 = 16alpha-hydroxyandrost-4-ene-3,17-dione + oxidized [NADPH--hemoprotein reductase] + H2O + H(+). It functions in the pathway steroid hormone biosynthesis. Its pathway is steroid biosynthesis; glucocorticoid biosynthesis. Regulated predominantly by intracellular cAMP levels. The 17,20-lyase activity is stimulated by cytochrome b5, which acts as an allosteric effector increasing the Vmax of the lyase activity. Its function is as follows. A cytochrome P450 monooxygenase involved in corticoid and androgen biosynthesis. Catalyzes 17-alpha hydroxylation of C21 steroids, which is common for both pathways. A second oxidative step, required only for androgen synthesis, involves an acyl-carbon cleavage. The 17-alpha hydroxy intermediates, as part of adrenal glucocorticoids biosynthesis pathway, are precursors of cortisol. Hydroxylates steroid hormones, pregnenolone and progesterone to form 17-alpha hydroxy metabolites, followed by the cleavage of the C17-C20 bond to form C19 steroids, dehydroepiandrosterone (DHEA) and androstenedione. Has 16-alpha hydroxylase activity. Catalyzes 16-alpha hydroxylation of 17-alpha hydroxy pregnenolone, followed by the cleavage of the C17-C20 bond to form 16-alpha-hydroxy DHEA. Also 16-alpha hydroxylates androgens, relevant for estriol synthesis. Mechanistically, uses molecular oxygen inserting one oxygen atom into a substrate, and reducing the second into a water molecule, with two electrons provided by NADPH via cytochrome P450 reductase (CPR; NADPH-ferrihemoprotein reductase). This chain is Steroid 17-alpha-hydroxylase/17,20 lyase (CYP17A1), found in Felis catus (Cat).